We begin with the raw amino-acid sequence, 211 residues long: Succinate dehydrogenase subunit 4, mitochondrial (211 aa).

A mitochondrion-targeting transit peptide spans 1 to 36; sequence MASRLLARSKALALALSRADAAAPGPAAGVQWLRTL. The disordered stretch occupies residues 41 to 64; sequence RDPAAAASPAPAPRQPAVGSPLGL. Position 166 (His166) interacts with heme. Tyr179 lines the a ubiquinone pocket. Residues 188–210 traverse the membrane as a helical segment; that stretch reads WVFIYFKILLIIMAKETVVYFDL.

As to quaternary structure, component of complex II composed of eight subunits in plants: four classical SDH subunits SDH1, SDH2, SDH3 and SDH4 (a flavoprotein (FP), an iron-sulfur protein (IP), and a cytochrome b composed of a large and a small subunit.), as well as four subunits unknown in mitochondria from bacteria and heterotrophic eukaryotes. Heme is required as a cofactor.

The protein localises to the mitochondrion inner membrane. It participates in carbohydrate metabolism; tricarboxylic acid cycle. Its function is as follows. Membrane-anchoring subunit of succinate dehydrogenase (SDH). In Oryza sativa subsp. japonica (Rice), this protein is Succinate dehydrogenase subunit 4, mitochondrial.